The following is a 785-amino-acid chain: Peptide transporter family 2 (785 aa).

9 helical membrane-spanning segments follow: residues 46 to 66, 72 to 92, 99 to 119, 134 to 154, 167 to 187, 208 to 228, 303 to 323, 345 to 365, and 382 to 402; these read FSFYGMRAVLTLYFFNILNFS, VLFHAFTVICYSSPLLGSILA, FWTIFFISIFYACGQILLAFS, LLGLLIVGLGTGGIKPCVSAF, ISLFFSMFYFSINAGSLISMW, FGIPAILMIVATLVFMAGSFW, VIVMMIPVPMFWALYDQQGST, MGVLNAFLILFFIPIFQSIVY, and AGGGILTAVSFFVCGIVQLFV. N-linked (GlcNAc...) asparagine glycosylation occurs at Asn467. 3 consecutive transmembrane segments (helical) span residues 670–690, 711–731, and 738–758; these read ILWQIPQYVILTAGEVLFSIT, WLFTTAIGDLIVVVIFMLNIF, and MFVFGGIMLFVIFVFILLAVF.

The protein belongs to the major facilitator superfamily. Proton-dependent oligopeptide transporter (POT/PTR) (TC 2.A.17) family. Expressed in vulval, pharyngeal and anal muscles.

The protein resides in the membrane. Its function is as follows. Proton-dependent uptake of di- or tripeptides, and to a minor extent tetrapeptides. Transport is independent of sodium and chloride ions. Protein shows high affinity to peptide substrates. The protein is Peptide transporter family 2 (pept-2) of Caenorhabditis elegans.